Consider the following 89-residue polypeptide: Co-chaperonin GroES (89 aa).

Belongs to the GroES chaperonin family. As to quaternary structure, heptamer of 7 subunits arranged in a ring. Interacts with the chaperonin GroEL.

The protein resides in the cytoplasm. Its function is as follows. Together with the chaperonin GroEL, plays an essential role in assisting protein folding. The GroEL-GroES system forms a nano-cage that allows encapsulation of the non-native substrate proteins and provides a physical environment optimized to promote and accelerate protein folding. GroES binds to the apical surface of the GroEL ring, thereby capping the opening of the GroEL channel. The protein is Co-chaperonin GroES of Porphyromonas gingivalis (strain ATCC 33277 / DSM 20709 / CIP 103683 / JCM 12257 / NCTC 11834 / 2561).